A 265-amino-acid chain; its full sequence is Urease accessory protein UreH (265 aa).

It belongs to the UreD family. As to quaternary structure, ureH, UreF and UreG form a complex that acts as a GTP-hydrolysis-dependent molecular chaperone, activating the urease apoprotein by helping to assemble the nickel containing metallocenter of UreC. The UreE protein probably delivers the nickel.

It localises to the cytoplasm. In terms of biological role, required for maturation of urease via the functional incorporation of the urease nickel metallocenter. The protein is Urease accessory protein UreH of Helicobacter pylori (strain HPAG1).